The chain runs to 531 residues: DNA damage-binding protein cmr1 (531 aa).

2 disordered regions span residues 37 to 83 (GIFP…RGIA) and 218 to 264 (DASQ…MHIH). Positions 53–64 (KPKKKPAPKKIK) are enriched in basic residues. The stretch at 186–227 (VTPERIYTMTFHPSEAKPLIFAGDKMGNLGVLDASQERPVSS) is one WD 1 repeat. The span at 233 to 245 (GDEEEQEDDDDPD) shows a compositional bias: acidic residues. WD repeat units lie at residues 253–293 (PHTR…SVET), 300–340 (SDDV…RTAV), 345–385 (LSEK…HDDP), 392–431 (LSRL…ASWE), 454–497 (GRWV…LAQL), and 500–531 (DGIT…CLWM).

Belongs to the WD repeat DDB2/WDR76 family.

Its function is as follows. DNA-binding protein that binds to both single- and double-stranded DNA. Binds preferentially to UV-damaged DNA. May be involved in DNA-metabolic processes. In Aspergillus clavatus (strain ATCC 1007 / CBS 513.65 / DSM 816 / NCTC 3887 / NRRL 1 / QM 1276 / 107), this protein is DNA damage-binding protein cmr1.